A 379-amino-acid polypeptide reads, in one-letter code: Junctional adhesion molecule-like (379 aa).

The signal sequence occupies residues 1–20 (MLCLLKLIVIPVILAPVGYP). Topologically, residues 21–281 (QGLPGLTVSS…QQGILNGNQL (261 aa)) are extracellular. Ig-like V-type domains are found at residues 24 to 135 (PGLT…KPVE) and 140 to 250 (PEEP…KTIV). A disulfide bridge connects residues C45 and C119. 3 N-linked (GlcNAc...) asparagine glycosylation sites follow: N79, N89, and N125. C158 and C236 form a disulfide bridge. The helical transmembrane segment at 282-302 (VIIVGIVCATFLLLPVLILIV) threads the bilayer. At 303–379 (KKAKWNKSSV…SLVRSSVRSK (77 aa)) the chain is on the cytoplasmic side. Position 355 is a phosphotyrosine (Y355).

Belongs to the immunoglobulin superfamily. In terms of assembly, homodimer; active form in leukocyte-endothelial cell adhesion. Interacts (homodimeric form) with CXADR. Interacts (via cytoplasmic domain) with the PI3 kinase; upon CXADR-binding. Interacts with ITGA4 and ITGB1; integrin alpha-4/beta-1 may regulate leukocyte to endothelial cells adhesion by controlling JAML homodimerization. In terms of tissue distribution, expressed by gamma-delta intraepithelial T cells (at protein level).

It is found in the cell membrane. The protein localises to the cell junction. In terms of biological role, transmembrane protein of the plasma membrane of leukocytes that control their migration and activation through interaction with CXADR, a plasma membrane receptor found on adjacent epithelial and endothelial cells. The interaction between both receptors mediates the activation of gamma-delta T-cells, a subpopulation of T-cells residing in epithelia and involved in tissue homeostasis and repair. Upon epithelial CXADR-binding, JAML induces downstream cell signaling events in gamma-delta T-cells through PI3-kinase and MAP kinases. It results in proliferation and production of cytokines and growth factors by T-cells that in turn stimulate epithelial tissues repair. It also controls the transmigration of leukocytes within epithelial and endothelial tissues through adhesive interactions with epithelial and endothelial CXADR. The sequence is that of Junctional adhesion molecule-like from Mus musculus (Mouse).